The chain runs to 364 residues: MMHVILPWELVEEILYRVPPLSLTRFKIVCKQWNTLFKSKSFVNNHLVRVRPQFLLWTDSKMYSVSVNLNDDQKIDMRELPLDIPYLNNFMRTYFTPCDGLLFCDSWSWRKKAAIWNPWLRQTKWIEYSKEKTFTFRGIGYDSGRPDKGHKIIGSSIYNKRKLIEDPLYRSVEIYTFETNGWKSMNTFSEEGEIRPLSDVSLNGNLYWVVSNGETHECFIESFDFSKEIYKCFCTLPWNYNSFHVPVLSTFRKDRLSVLKRKRMAETNNIEIWVTKNKINDDGEPVAWIKFMTVSIAISSNSSPSFFIDNVYQKSFIMCCEDENNKLCVYIVRGNALTKIQIVGVDAKNYINHCSYVPSLIPVP.

The 50-residue stretch at 1–50 (MMHVILPWELVEEILYRVPPLSLTRFKIVCKQWNTLFKSKSFVNNHLVRV) folds into the F-box domain. Kelch repeat units follow at residues 156-205 (SIYN…LNGN) and 328-364 (CVYI…IPVP).

The sequence is that of Putative F-box/kelch-repeat protein At1g12170 from Arabidopsis thaliana (Mouse-ear cress).